A 1132-amino-acid polypeptide reads, in one-letter code: Mis18-binding protein 1 (1132 aa).

Residue lysine 7 forms a Glycyl lysine isopeptide (Lys-Gly) (interchain with G-Cter in SUMO2) linkage. At serine 9 the chain carries Phosphoserine. Residue lysine 65 forms a Glycyl lysine isopeptide (Lys-Gly) (interchain with G-Cter in SUMO2) linkage. A phosphoserine mark is found at serine 110, serine 131, serine 135, serine 172, and serine 192. The segment at 123–154 is disordered; it reads LRDKQEQPSRNSSLLEPQKSGNNETFTPNRVE. The segment covering 130-150 has biased composition (polar residues); the sequence is PSRNSSLLEPQKSGNNETFTP. Glycyl lysine isopeptide (Lys-Gly) (interchain with G-Cter in SUMO2) cross-links involve residues lysine 211 and lysine 262. Serine 299 is subject to Phosphoserine. The tract at residues 306–332 is disordered; the sequence is SERTTEGTSQQKVKEGNGKTVPGETGL. Phosphoserine is present on serine 365. Residues 383 to 469 enclose the SANTA domain; the sequence is VQLQEWMIKS…MFGFPENWKE (87 aa). The tract at residues 482-518 is disordered; sequence EKNREKTKQKQKTGRSVRDIRKSMKNDARENQTDTAQ. Residues 497-513 show a composition bias toward basic and acidic residues; that stretch reads SVRDIRKSMKNDARENQ. Residues lysine 534, lysine 612, lysine 639, and lysine 647 each participate in a glycyl lysine isopeptide (Lys-Gly) (interchain with G-Cter in SUMO2) cross-link. Phosphothreonine is present on threonine 653. Residues lysine 727 and lysine 742 each participate in a glycyl lysine isopeptide (Lys-Gly) (interchain with G-Cter in SUMO2) cross-link. The interval 765–798 is disordered; that stretch reads HQSSPDLSSEESETEKEIKRKAEVKKTKAGNTKE. 2 positions are modified to phosphoserine: serine 772 and serine 773. A compositionally biased stretch (basic and acidic residues) spans 779-790; it reads EKEIKRKAEVKK. Threonine 821 carries the post-translational modification Phosphothreonine. The residue at position 824 (serine 824) is a Phosphoserine. A Glycyl lysine isopeptide (Lys-Gly) (interchain with G-Cter in SUMO2) cross-link involves residue lysine 840. Serine 860 bears the Phosphoserine mark. Residues 875-930 enclose the SANT domain; sequence IQDKEWNEKELQKLHCAFASLPKHKPGFWSEVAAAVGSRSPEECQRKYMENPRGKG. A Glycyl lysine isopeptide (Lys-Gly) (interchain with G-Cter in SUMO2) cross-link involves residue lysine 899. The interval 923–957 is disordered; that stretch reads MENPRGKGSQKHVTKKKPANSKGQNGKRGDADQKQ. Residues 930 to 941 are compositionally biased toward basic residues; it reads GSQKHVTKKKPA. Glycyl lysine isopeptide (Lys-Gly) (interchain with G-Cter in SUMO2) cross-links involve residues lysine 956, lysine 964, and lysine 983. Serine 1008 carries the post-translational modification Phosphoserine. A Glycyl lysine isopeptide (Lys-Gly) (interchain with G-Cter in SUMO2) cross-link involves residue lysine 1079. Serine 1086 carries the phosphoserine modification. A phosphothreonine mark is found at threonine 1087 and threonine 1089. Serine 1104 and serine 1116 each carry phosphoserine.

As to quaternary structure, interacts with SP1. Interacts with MIS18A. Identified in a complex containing MIS18A, OIP5/MIS18B, MIS18BP1, RBBP7 and RBBP4. Interacts with KAT7/HBO1. Interacts (via N-terminus) with FLNA (via N-terminus).

The protein resides in the nucleus. The protein localises to the chromosome. It localises to the centromere. In terms of biological role, required for recruitment of CENPA to centromeres and normal chromosome segregation during mitosis. The polypeptide is Mis18-binding protein 1 (MIS18BP1) (Homo sapiens (Human)).